We begin with the raw amino-acid sequence, 534 residues long: 2,3-bisphosphoglycerate-independent phosphoglycerate mutase (534 aa).

Residues Asp15 and Ser65 each contribute to the Mn(2+) site. Catalysis depends on Ser65, which acts as the Phosphoserine intermediate. Substrate is bound by residues His126, 156-157, Arg188, Arg194, 260-263, and Lys333; these read RD and RPDR. Mn(2+) contacts are provided by Asp400, His404, Asp441, His442, and His459.

It belongs to the BPG-independent phosphoglycerate mutase family. Monomer. Mn(2+) is required as a cofactor.

The catalysed reaction is (2R)-2-phosphoglycerate = (2R)-3-phosphoglycerate. Its pathway is carbohydrate degradation; glycolysis; pyruvate from D-glyceraldehyde 3-phosphate: step 3/5. Catalyzes the interconversion of 2-phosphoglycerate and 3-phosphoglycerate. The protein is 2,3-bisphosphoglycerate-independent phosphoglycerate mutase of Acaryochloris marina (strain MBIC 11017).